Reading from the N-terminus, the 229-residue chain is Prolactin (229 aa).

Positions 1-30 are cleaved as a signal peptide; it reads MDSKGSSQKGSRLLLLLVVSNLLLCQGVVS. Cysteines 34 and 41 form a disulfide. Ser56, Ser64, and Ser120 each carry phosphoserine. 2 disulfides stabilise this stretch: Cys88–Cys204 and Cys221–Cys229.

This sequence belongs to the somatotropin/prolactin family. Interacts with PRLR.

The protein resides in the secreted. Functionally, prolactin acts primarily on the mammary gland by promoting lactation. This chain is Prolactin (PRL), found in Bos taurus (Bovine).